Here is a 326-residue protein sequence, read N- to C-terminus: AA9 family lytic polysaccharide monooxygenase B (326 aa).

The first 19 residues, 1–19, serve as a signal peptide directing secretion; that stretch reads MKSFTIAALAALWAQEAAA. The Cu(2+) site is built by His-20 and His-98. Residues Cys-57 and Cys-192 are joined by a disulfide bond. O2 is bound by residues His-178 and Gln-187. Residue Tyr-189 participates in Cu(2+) binding. The segment covering 265-281 has biased composition (low complexity); the sequence is PSATLTQPTSTATATSA. A disordered region spans residues 265–286; sequence PSATLTQPTSTATATSAPGGGG. Residues 289–326 form the CBM1 domain; it reads CTAAKYQQCGGTGYTGCTTCASGSTCSAVSPPYYSQCL.

This sequence belongs to the polysaccharide monooxygenase AA9 family. The cofactor is Cu(2+).

It localises to the secreted. It carries out the reaction [(1-&gt;4)-beta-D-glucosyl]n+m + reduced acceptor + O2 = 4-dehydro-beta-D-glucosyl-[(1-&gt;4)-beta-D-glucosyl]n-1 + [(1-&gt;4)-beta-D-glucosyl]m + acceptor + H2O.. Its function is as follows. Lytic polysaccharide monooxygenase (LPMO) that depolymerizes crystalline and amorphous polysaccharides via the oxidation of scissile alpha- or beta-(1-4)-glycosidic bonds, yielding C1 and C4 oxidation products. Catalysis by LPMOs requires the reduction of the active-site copper from Cu(II) to Cu(I) by a reducing agent and H(2)O(2) or O(2) as a cosubstrate. Shows no activity on wheat arabinoxylan, konjac glucomannan, acetylated spruce galactoglucomannan, or cellopentaose. In Thermothielavioides terrestris (strain ATCC 38088 / NRRL 8126) (Thielavia terrestris), this protein is AA9 family lytic polysaccharide monooxygenase B.